A 393-amino-acid polypeptide reads, in one-letter code: Transcription factor bHLH112 (393 aa).

2 disordered regions span residues 248–277 (TRAQSESLKRAKDNESAAKKPRVTTPSPLP) and 332–356 (KQGASNQQQQQISGKSKSQDENENH). Residues 254 to 265 (SLKRAKDNESAA) show a composition bias toward basic and acidic residues. The bHLH domain maps to 270 to 319 (VTTPSPLPTFKVRKENLRDQITSLQQLVSPFGKTDTASVLQEAIEYIKFL). Over residues 332–347 (KQGASNQQQQQISGKS) the composition is skewed to low complexity.

As to quaternary structure, homodimer.

It localises to the nucleus. The protein is Transcription factor bHLH112 (BHLH112) of Arabidopsis thaliana (Mouse-ear cress).